A 143-amino-acid chain; its full sequence is uncharacterized protein (143 aa).

The active site involves Cys-12.

The protein belongs to the ArsC family.

This is an uncharacterized protein from Rhodospirillum rubrum.